The following is a 72-amino-acid chain: Putative DNA-directed RNA polymerase subunit omega (72 aa).

It belongs to the RNA polymerase subunit omega family.

The protein resides in the plastid. Its subcellular location is the chloroplast. It carries out the reaction RNA(n) + a ribonucleoside 5'-triphosphate = RNA(n+1) + diphosphate. Its function is as follows. May be involved in RNA polymerase activity. The sequence is that of Putative DNA-directed RNA polymerase subunit omega (rpoZ) from Cyanidium caldarium (Red alga).